A 207-amino-acid chain; its full sequence is Ras-related protein Rab-7a (207 aa).

Thr2 carries the post-translational modification N-acetylthreonine. The GTP site is built by Ser17, Gly18, Val19, Gly20, Lys21, Thr22, Ser23, Ser34, Asn35, Tyr37, and Thr40. Thr22 contacts Mg(2+). Residues 28 to 41 (YVNKKFSNQYKATI) carry the Switch 1 motif. Mg(2+) contacts are provided by Thr40 and Asp63. Residue Gly66 participates in GTP binding. Residues 67–82 (QERFQSLGVAFYRGAD) carry the Switch 2 motif. Ser72 carries the phosphoserine modification. Residues Asn125, Lys126, Asp128, Ala156, and Lys157 each contribute to the GTP site. Residues Lys191 and Lys194 each participate in a glycyl lysine isopeptide (Lys-Gly) (interchain with G-Cter in ubiquitin) cross-link. Residues Cys205 and Cys207 are each lipidated (S-geranylgeranyl cysteine). Cys207 is subject to Cysteine methyl ester.

Belongs to the small GTPase superfamily. Rab family. As to quaternary structure, interacts with NTRK1/TRKA. Interacts with RILP. Interacts with PSMA7. Interacts with RNF115. Interacts with FYCO1. Interacts with the PIK3C3/VPS34-PIK3R4 complex. The GTP-bound form interacts with OSBPL1A. The GTP-bound form interacts with RAC1. Interacts with CLN3. Interacts with CHM, the substrate-binding subunit of the Rab geranylgeranyltransferase complex. Interacts with C9orf72. Does not interact with HPS4 and the BLOC-3 complex (heterodimer of HPS1 and HPS4). Interacts with CLN5. Interacts with PLEKHM1 (via N- and C-terminus). Interacts with PRPH; the interaction is direct. Interacts with VPS13A. The GDP-bound form interacts with RIMOC1. Interacts with the MON1A-CCZ1B complex and this interaction is enhanced in the presence of RIMOC1. Interacts with VPS39 and VPS41. Forms a ternary complex with LAMP2 and RUFY4; the interaction with LAMP2 is mediated by RUFY4 (via RUN and coiled coil domains). The cofactor is Mg(2+). Deubiquitination at Lys-191 and Lys-194 by USP32. Post-translationally, phosphorylated at Ser-72 by LRRK1; phosphorylation is dependent on protein kinase C (PKC) activation of LRRK1. In terms of processing, prenylated. Prenylation is required for association with cellular membranes.

It localises to the cytoplasmic vesicle. Its subcellular location is the phagosome membrane. It is found in the late endosome membrane. The protein resides in the lysosome membrane. The protein localises to the melanosome membrane. It localises to the autophagosome membrane. Its subcellular location is the lipid droplet. It is found in the endosome membrane. The protein resides in the mitochondrion membrane. The catalysed reaction is GTP + H2O = GDP + phosphate + H(+). Its activity is regulated as follows. Regulated by guanine nucleotide exchange factors (GEFs) which promote the exchange of bound GDP for free GTP. Regulated by GTPase activating proteins (GAPs) which increase the GTP hydrolysis activity. Inhibited by GDP dissociation inhibitors (GDIs). The small GTPases Rab are key regulators of intracellular membrane trafficking, from the formation of transport vesicles to their fusion with membranes. Rabs cycle between an inactive GDP-bound form and an active GTP-bound form that is able to recruit to membranes different sets of downstream effectors directly responsible for vesicle formation, movement, tethering and fusion. In its active state, RAB7A binds to a variety of effector proteins playing a key role in the regulation of endo-lysosomal trafficking. Governs early-to-late endosomal maturation, microtubule minus-end as well as plus-end directed endosomal migration and positioning, and endosome-lysosome transport through different protein-protein interaction cascades. Also plays a central role in growth-factor-mediated cell signaling, nutrient-transporter-mediated nutrient uptake, neurotrophin transport in the axons of neurons and lipid metabolism. Also involved in regulation of some specialized endosomal membrane trafficking, such as maturation of melanosomes, pathogen-induced phagosomes (or vacuoles) and autophagosomes. Plays a role in the maturation and acidification of phagosomes that engulf pathogens, such as S.aureus and Mycobacteria. Plays a role in the fusion of phagosomes with lysosomes. In concert with RAC1, plays a role in regulating the formation of RBs (ruffled borders) in osteoclasts. Controls the endosomal trafficking and neurite outgrowth signaling of NTRK1/TRKA. Regulates the endocytic trafficking of the EGF-EGFR complex by regulating its lysosomal degradation. Involved in the ADRB2-stimulated lipolysis through lipophagy, a cytosolic lipase-independent autophagic pathway. Required for the exosomal release of SDCBP, CD63 and syndecan. Required for vesicular trafficking and cell surface expression of ACE2. May play a role in PRPH neuronal intermediate filament assembly. The polypeptide is Ras-related protein Rab-7a (RAB7A) (Canis lupus familiaris (Dog)).